The chain runs to 245 residues: Adapter protein MecA (245 aa).

It belongs to the MecA family. In terms of assembly, homodimer.

Its function is as follows. Enables the recognition and targeting of unfolded and aggregated proteins to the ClpC protease or to other proteins involved in proteolysis. This is Adapter protein MecA from Streptococcus pneumoniae serotype 4 (strain ATCC BAA-334 / TIGR4).